Reading from the N-terminus, the 148-residue chain is MKAPLLLGLLLLSVTVQGKVFERCDLARTLKRLGLAGFKGVSLANWMCLAKWESDYNTKATNYNPGSRSTDYGIFQINSRYWCNDGKTPRAVNSCHIPCSDLLKDDITQAVACAKRVVSDPNGIRAWVAWRAHCENQDVSQYVRNCGV.

The N-terminal stretch at 1–18 (MKAPLLLGLLLLSVTVQG) is a signal peptide. The 130-residue stretch at 19 to 148 (KVFERCDLAR…VSQYVRNCGV (130 aa)) folds into the C-type lysozyme domain. Cystine bridges form between cysteine 24-cysteine 146, cysteine 48-cysteine 134, cysteine 83-cysteine 99, and cysteine 95-cysteine 113. Residues glutamate 53 and aspartate 71 contribute to the active site.

Belongs to the glycosyl hydrolase 22 family. In terms of assembly, monomer.

It is found in the secreted. The catalysed reaction is Hydrolysis of (1-&gt;4)-beta-linkages between N-acetylmuramic acid and N-acetyl-D-glucosamine residues in a peptidoglycan and between N-acetyl-D-glucosamine residues in chitodextrins.. Its function is as follows. Lysozymes have primarily a bacteriolytic function; those in tissues and body fluids are associated with the monocyte-macrophage system and enhance the activity of immunoagents. This chain is Lysozyme C (LYZ), found in Leptonychotes weddellii (Weddell seal).